Reading from the N-terminus, the 657-residue chain is Tyramine beta-hydroxylase (657 aa).

Residues 77–97 (VALLFLLVAYCGGVVHAGEIV) traverse the membrane as a helical segment. The DOMON domain occupies 103–214 (TNVTVKWHTD…GTTQFYIAAS (112 aa)). N-linked (GlcNAc...) asparagine glycosylation is found at Asn-104 and Asn-143. Tyr-278 is a catalytic residue. Intrachain disulfides connect Cys-280–Cys-330 and Cys-319–Cys-342. Cu(2+)-binding residues include His-312 and His-313. Cu(2+)-binding residues include His-380, His-458, His-460, and Met-533. Cystine bridges form between Cys-437–Cys-549, Cys-441–Cys-606, and Cys-512–Cys-534. His-458 is an active-site residue. N-linked (GlcNAc...) asparagine glycosylation is present at Asn-555.

It belongs to the copper type II ascorbate-dependent monooxygenase family. Cu(2+) serves as cofactor. As to expression, present in synaptic regions of RIC interneurons. Present in gonadal sheath cells of hermaphrodites (at protein level).

It is found in the membrane. It catalyses the reaction tyramine + L-ascorbate + O2 = (R)-octopamine + L-dehydroascorbate + H2O. Functionally, required for the conversion of tyramine to octopamine, a precursor of octapamine but probably itself a neurotransmitter. Involved in the regulation of egg laying, which is inhibited by tyramine. Due to its involvement in octopamine biosynthesis, also required for crtc-1-dependent regulation of AMPK-mediated longevity. The sequence is that of Tyramine beta-hydroxylase from Caenorhabditis elegans.